We begin with the raw amino-acid sequence, 391 residues long: 3-ketoacyl-CoA thiolase (391 aa).

C95 functions as the Acyl-thioester intermediate in the catalytic mechanism. Residues H347 and C377 each act as proton acceptor in the active site.

Belongs to the thiolase-like superfamily. Thiolase family. Heterotetramer of two alpha chains (FadB) and two beta chains (FadA).

The protein localises to the cytoplasm. The enzyme catalyses an acyl-CoA + acetyl-CoA = a 3-oxoacyl-CoA + CoA. The protein operates within lipid metabolism; fatty acid beta-oxidation. Its function is as follows. Catalyzes the final step of fatty acid oxidation in which acetyl-CoA is released and the CoA ester of a fatty acid two carbons shorter is formed. This chain is 3-ketoacyl-CoA thiolase, found in Marinobacter nauticus (strain ATCC 700491 / DSM 11845 / VT8) (Marinobacter aquaeolei).